Consider the following 437-residue polypeptide: Phosphoethanolamine N-methyltransferase 2 (437 aa).

Residues 186-187 (QY) and Y195 each bind N-methylethanolamine phosphate. Residues 204–205 (IS), G232, D254, 281–282 (DA), and R298 contribute to the S-adenosyl-L-homocysteine site. Residues Y329, Y343, 347–349 (RAY), and K415 each bind N-methylethanolamine phosphate.

The protein belongs to the class I-like SAM-binding methyltransferase superfamily.

The catalysed reaction is N-methylethanolamine phosphate + S-adenosyl-L-methionine = N,N-dimethylethanolamine phosphate + S-adenosyl-L-homocysteine + H(+). It carries out the reaction N,N-dimethylethanolamine phosphate + S-adenosyl-L-methionine = phosphocholine + S-adenosyl-L-homocysteine + H(+). It participates in phospholipid metabolism; phosphatidylcholine biosynthesis; phosphocholine from phosphoethanolamine. Feedback inhibition by phosphatidylcholine and also by S-adenosylhomocysteine. In terms of biological role, catalyzes the last two methylation reactions in the synthesis of phosphocholine, by converting phospho-monomethylethanolamine (N-methylethanolamine phosphate) into phospho-dimethylethanolamine (N,N-dimethylethanolamine phosphate) and the latter into phosphocholine. Phosphocholine is a precursor for phosphatidylcholine, a major component in membranes and a precursor itself in the production of glycoconjugates secreted by parasitic nematodes to avoid host immune responses. The chain is Phosphoethanolamine N-methyltransferase 2 from Caenorhabditis elegans.